The sequence spans 239 residues: Putative 3-methyladenine DNA glycosylase (239 aa).

This sequence belongs to the DNA glycosylase MPG family.

In Pseudomonas aeruginosa (strain ATCC 15692 / DSM 22644 / CIP 104116 / JCM 14847 / LMG 12228 / 1C / PRS 101 / PAO1), this protein is Putative 3-methyladenine DNA glycosylase.